We begin with the raw amino-acid sequence, 704 residues long: Elongation factor G (704 aa).

The 283-residue stretch at 8–290 folds into the tr-type G domain; the sequence is ARYRNIGISA…AVIEYLPAPT (283 aa). GTP-binding positions include 17–24, 88–92, and 142–145; these read AHIDAGKT, DTPGH, and NKMD.

It belongs to the TRAFAC class translation factor GTPase superfamily. Classic translation factor GTPase family. EF-G/EF-2 subfamily.

It localises to the cytoplasm. Its function is as follows. Catalyzes the GTP-dependent ribosomal translocation step during translation elongation. During this step, the ribosome changes from the pre-translocational (PRE) to the post-translocational (POST) state as the newly formed A-site-bound peptidyl-tRNA and P-site-bound deacylated tRNA move to the P and E sites, respectively. Catalyzes the coordinated movement of the two tRNA molecules, the mRNA and conformational changes in the ribosome. The protein is Elongation factor G of Proteus mirabilis (strain HI4320).